A 338-amino-acid polypeptide reads, in one-letter code: Heat-inducible transcription repressor HrcA (338 aa).

The protein belongs to the HrcA family.

Functionally, negative regulator of class I heat shock genes (grpE-dnaK-dnaJ and groELS operons). Prevents heat-shock induction of these operons. The chain is Heat-inducible transcription repressor HrcA from Bacillus cereus (strain B4264).